The chain runs to 69 residues: Small, acid-soluble spore protein 1 (69 aa).

It belongs to the alpha/beta-type SASP family.

SASP are bound to spore DNA. They are double-stranded DNA-binding proteins that cause DNA to change to an a-like conformation. They protect the DNA backbone from chemical and enzymatic cleavage and are thus involved in dormant spore's high resistance to UV light. In Sporosarcina ureae, this protein is Small, acid-soluble spore protein 1 (Su-1).